A 491-amino-acid chain; its full sequence is Cytosolic Fe-S cluster assembly factor NAR1 (491 aa).

C20, C59, C62, C65, C177, C231, C412, and C416 together coordinate [4Fe-4S] cluster.

Belongs to the NARF family. Interacts with CIA1.

The protein resides in the cytoplasm. It is found in the nucleus. In terms of biological role, essential component of a cytosolic Fe/S protein assembly machinery. Required for maturation of extramitochondrial Fe/S proteins. May play a role in the transfer of pre-assembled Fe/S clusters to target apoproteins. The sequence is that of Cytosolic Fe-S cluster assembly factor NAR1 (NAR1) from Saccharomyces cerevisiae (strain ATCC 204508 / S288c) (Baker's yeast).